Here is a 211-residue protein sequence, read N- to C-terminus: LexA repressor (211 aa).

The segment at residues 27–47 is a DNA-binding region (H-T-H motif); the sequence is QTEIARAFGFKGVRAVQHHLD. Active-site for autocatalytic cleavage activity residues include Ser131 and Lys168.

The protein belongs to the peptidase S24 family. Homodimer.

The enzyme catalyses Hydrolysis of Ala-|-Gly bond in repressor LexA.. Represses a number of genes involved in the response to DNA damage (SOS response), including recA and lexA. In the presence of single-stranded DNA, RecA interacts with LexA causing an autocatalytic cleavage which disrupts the DNA-binding part of LexA, leading to derepression of the SOS regulon and eventually DNA repair. In Xylella fastidiosa (strain 9a5c), this protein is LexA repressor.